A 332-amino-acid chain; its full sequence is Fructose-1,6-bisphosphatase class 1 (332 aa).

Mg(2+) is bound by residues Glu-89, Asp-110, Leu-112, and Asp-113. Substrate contacts are provided by residues 113–116 (DGSS), Asn-206, Tyr-239, 257–259 (YLY), and Lys-269. Residue Glu-275 coordinates Mg(2+).

The protein belongs to the FBPase class 1 family. As to quaternary structure, homotetramer. The cofactor is Mg(2+).

Its subcellular location is the cytoplasm. The catalysed reaction is beta-D-fructose 1,6-bisphosphate + H2O = beta-D-fructose 6-phosphate + phosphate. It functions in the pathway carbohydrate biosynthesis; gluconeogenesis. In Salmonella typhi, this protein is Fructose-1,6-bisphosphatase class 1.